Here is a 193-residue protein sequence, read N- to C-terminus: Ribosome maturation factor RimM (193 aa).

In terms of domain architecture, PRC barrel spans 97 to 172 (DDEFYLTDLV…LILADPPALV (76 aa)). A disordered region spans residues 168 to 193 (PPALVGDHEGPEEKGLDENEELGDRD). Over residues 173 to 193 (GDHEGPEEKGLDENEELGDRD) the composition is skewed to basic and acidic residues.

The protein belongs to the RimM family. In terms of assembly, binds ribosomal protein uS19.

It localises to the cytoplasm. In terms of biological role, an accessory protein needed during the final step in the assembly of 30S ribosomal subunit, possibly for assembly of the head region. Essential for efficient processing of 16S rRNA. May be needed both before and after RbfA during the maturation of 16S rRNA. It has affinity for free ribosomal 30S subunits but not for 70S ribosomes. In Caulobacter vibrioides (strain ATCC 19089 / CIP 103742 / CB 15) (Caulobacter crescentus), this protein is Ribosome maturation factor RimM.